Here is a 115-residue protein sequence, read N- to C-terminus: Replication initiation control protein YabA (115 aa).

Residues His90, Cys92, Cys106, and Cys109 each coordinate Zn(2+).

The protein belongs to the YabA family. As to quaternary structure, homotetramer. Interacts with both DnaA and DnaN, acting as a bridge between these two proteins. Zn(2+) serves as cofactor.

The protein localises to the cytoplasm. The protein resides in the nucleoid. In terms of biological role, involved in control of chromosome replication initiation. Inhibits the cooperative binding of DnaA to the oriC region, thus negatively regulating initiation of chromosome replication. Inhibits the ability of DnaA-ATP to form a helix on DNA; does not disassemble preformed DnaA-DNA helices. Decreases the residence time of DnaA on the chromosome at its binding sites (oriC, replication forks and promoter-binding sites). Tethers DnaA to the replication machinery via the DNA polymerase beta sliding clamp subunit (dnaN). Associates with oriC and other DnaA targets on the chromosome in a DnaA-dependent manner. The sequence is that of Replication initiation control protein YabA from Staphylococcus epidermidis (strain ATCC 35984 / DSM 28319 / BCRC 17069 / CCUG 31568 / BM 3577 / RP62A).